The primary structure comprises 431 residues: MWRRSVVYRFSSRISVSSSLPNPRLIPWSRELCAVNSFSQPPVSTESTAKLGITGVRSDANRVFATATAAATATATTGEISSRVAALAGLGHHYARCYWELSKAKLSMLVVATSGTGYILGTGNAAISFPGLCYTCAGTMMIAASANSLNQIFEISNDSKMKRTMLRPLPSGRISVPHAVAWATIAGASGACLLASKTNMLAAGLASANLVLYAFVYTPLKQLHPINTWVGAVVGAIPPLLGWAAASGQISYNSMILPAALYFWQIPHFMALAHLCRNDYAAGGYKMLSLFDPSGKRIAAVALRNCFYMIPLGFIAYDWGLTSSWFCLESTLLTLAIAATAFSFYRDRTMHKARKMFHASLLFLPVFMSGLLLHRVSNDNQQQLVEEAGLTNSVSGEVKTQRRKKRVAQPPVAYASAAPFPFLPAPSFYSP.

The N-terminal 33 residues, 1-33 (MWRRSVVYRFSSRISVSSSLPNPRLIPWSRELC), are a transit peptide targeting the mitochondrion. The next 9 membrane-spanning stretches (helical) occupy residues 109–129 (LVVA…AISF), 131–153 (GLCY…NQIF), 174–194 (ISVP…ACLL), 200–220 (MLAA…YTPL), 226–246 (INTW…WAAA), 255–275 (MILP…LAHL), 298–317 (IAAV…FIAY), 322–344 (TSSW…AFSF), and 356–376 (MFHA…LHRV).

The protein belongs to the ubiA prenyltransferase (TC 3.D.4.8) family.

The protein resides in the mitochondrion inner membrane. The catalysed reaction is heme b + (2E,6E)-farnesyl diphosphate + H2O = Fe(II)-heme o + diphosphate. Functionally, converts protoheme IX and farnesyl diphosphate to heme O. This Arabidopsis thaliana (Mouse-ear cress) protein is Protoheme IX farnesyltransferase, mitochondrial (COX10).